A 441-amino-acid polypeptide reads, in one-letter code: Interferon-related developmental regulator 2 (441 aa).

Residues 1-15 (MPRARKGNALRKGGQ) are compositionally biased toward basic residues. Residues 1-51 (MPRARKGNALRKGGQRRGGGARSSTQADSGSSEDEAASEARSTTSDCPSLL) are disordered.

The protein belongs to the IFRD family. As to quaternary structure, associates with ribosomes; promoting ribosome inactivation.

In terms of biological role, ribosome-binding protein that acts as an inhibitor of mRNA translation by promoting ribosome inactivation. Associates with the P- and E-sites of the ribosome and inserts a C-terminal helix into the mRNA exit channel to preclude translation. The protein is Interferon-related developmental regulator 2 of Mus musculus (Mouse).